A 201-amino-acid polypeptide reads, in one-letter code: Holliday junction branch migration complex subunit RuvA (201 aa).

The interval 1–64 (MYEYIRGQFQ…EDFIGLYGFT (64 aa)) is domain I. The domain II stretch occupies residues 65 to 143 (TKEELEMFKL…PDELTSEEEQ (79 aa)). A flexible linker region spans residues 144–152 (LIEGINDNS). The segment at 153–201 (DYSFNINETLSALMALGYTEKEAQKALEKVDKTLSIENMIKESLKLLMR) is domain III.

The protein belongs to the RuvA family. Homotetramer. Forms an RuvA(8)-RuvB(12)-Holliday junction (HJ) complex. HJ DNA is sandwiched between 2 RuvA tetramers; dsDNA enters through RuvA and exits via RuvB. An RuvB hexamer assembles on each DNA strand where it exits the tetramer. Each RuvB hexamer is contacted by two RuvA subunits (via domain III) on 2 adjacent RuvB subunits; this complex drives branch migration. In the full resolvosome a probable DNA-RuvA(4)-RuvB(12)-RuvC(2) complex forms which resolves the HJ.

The protein localises to the cytoplasm. Its function is as follows. The RuvA-RuvB-RuvC complex processes Holliday junction (HJ) DNA during genetic recombination and DNA repair, while the RuvA-RuvB complex plays an important role in the rescue of blocked DNA replication forks via replication fork reversal (RFR). RuvA specifically binds to HJ cruciform DNA, conferring on it an open structure. The RuvB hexamer acts as an ATP-dependent pump, pulling dsDNA into and through the RuvAB complex. HJ branch migration allows RuvC to scan DNA until it finds its consensus sequence, where it cleaves and resolves the cruciform DNA. The sequence is that of Holliday junction branch migration complex subunit RuvA from Clostridium perfringens (strain SM101 / Type A).